Consider the following 278-residue polypeptide: OX-2 membrane glycoprotein (278 aa).

Residues Met1–Ala30 form the signal peptide. Positions Gln31 to Val141 constitute an Ig-like V-type domain. The Extracellular segment spans residues Gln31–Gly232. Disulfide bonds link Cys51-Cys121 and Cys118-Cys136. N-linked (GlcNAc...) asparagine glycans are attached at residues Asn95, Asn103, and Asn110. In terms of domain architecture, Ig-like C2-type spans Gln142 to Gly232. N-linked (GlcNAc...) asparagine glycans are attached at residues Asn157, Asn181, and Asn190. The cysteines at positions 160 and 214 are disulfide-linked. A helical transmembrane segment spans residues Tyr233–Trp259. Residues Lys260–Thr278 lie on the Cytoplasmic side of the membrane.

In terms of assembly, CD200 and CD200R1 interact via their respective N-terminal Ig-like domains.

The protein resides in the cell membrane. Its function is as follows. Costimulates T-cell proliferation. May regulate myeloid cell activity in a variety of tissues. The sequence is that of OX-2 membrane glycoprotein (CD200) from Homo sapiens (Human).